The primary structure comprises 89 residues: Small ribosomal subunit protein uS15 (89 aa).

It belongs to the universal ribosomal protein uS15 family. In terms of assembly, part of the 30S ribosomal subunit. Forms a bridge to the 50S subunit in the 70S ribosome, contacting the 23S rRNA.

One of the primary rRNA binding proteins, it binds directly to 16S rRNA where it helps nucleate assembly of the platform of the 30S subunit by binding and bridging several RNA helices of the 16S rRNA. Functionally, forms an intersubunit bridge (bridge B4) with the 23S rRNA of the 50S subunit in the ribosome. The polypeptide is Small ribosomal subunit protein uS15 (Psychromonas ingrahamii (strain DSM 17664 / CCUG 51855 / 37)).